A 469-amino-acid chain; its full sequence is Glutamine synthetase (469 aa).

Residues 15-96 (EDVKFIDVRF…INFFIHDPIT (82 aa)) enclose the GS beta-grasp domain. The region spanning 104 to 469 (PRNVAKKAEA…PYEYEQYYDV (366 aa)) is the GS catalytic domain. Positions 129 and 131 each coordinate Mg(2+). Residue E205 coordinates ATP. E210 and E218 together coordinate Mg(2+). 221–223 (YKF) is a binding site for ATP. Residues 262-263 (NG) and G263 each bind L-glutamate. H267 serves as a coordination point for Mg(2+). ATP is bound by residues 269–271 (HQS) and S271. Residues R320, E326, and R338 each contribute to the L-glutamate site. Residues R338, R343, and K352 each coordinate ATP. E357 serves as a coordination point for Mg(2+). Position 359 (R359) interacts with L-glutamate. Y397 bears the O-AMP-tyrosine mark.

This sequence belongs to the glutamine synthetase family. Oligomer of 12 subunits arranged in the form of two hexagons. Mg(2+) serves as cofactor.

It is found in the cytoplasm. The enzyme catalyses L-glutamate + NH4(+) + ATP = L-glutamine + ADP + phosphate + H(+). The activity of this enzyme could be controlled by adenylation under conditions of abundant glutamine. In terms of biological role, catalyzes the ATP-dependent biosynthesis of glutamine from glutamate and ammonia. The protein is Glutamine synthetase of Streptomyces viridochromogenes.